The primary structure comprises 313 residues: Carbamate kinase 2 (313 aa).

This sequence belongs to the carbamate kinase family.

Its subcellular location is the cytoplasm. The enzyme catalyses hydrogencarbonate + NH4(+) + ATP = carbamoyl phosphate + ADP + H2O + H(+). Its pathway is metabolic intermediate metabolism; carbamoyl phosphate degradation; CO(2) and NH(3) from carbamoyl phosphate: step 1/1. The polypeptide is Carbamate kinase 2 (arcC2) (Staphylococcus aureus (strain Mu50 / ATCC 700699)).